The following is a 402-amino-acid chain: Arginine biosynthesis bifunctional protein ArgJ (402 aa).

6 residues coordinate substrate: threonine 152, lysine 178, threonine 189, glutamate 275, asparagine 397, and threonine 402. Threonine 189 (nucleophile) is an active-site residue.

Belongs to the ArgJ family. As to quaternary structure, heterotetramer of two alpha and two beta chains.

It localises to the cytoplasm. It catalyses the reaction N(2)-acetyl-L-ornithine + L-glutamate = N-acetyl-L-glutamate + L-ornithine. It carries out the reaction L-glutamate + acetyl-CoA = N-acetyl-L-glutamate + CoA + H(+). It functions in the pathway amino-acid biosynthesis; L-arginine biosynthesis; L-ornithine and N-acetyl-L-glutamate from L-glutamate and N(2)-acetyl-L-ornithine (cyclic): step 1/1. Its pathway is amino-acid biosynthesis; L-arginine biosynthesis; N(2)-acetyl-L-ornithine from L-glutamate: step 1/4. Catalyzes two activities which are involved in the cyclic version of arginine biosynthesis: the synthesis of N-acetylglutamate from glutamate and acetyl-CoA as the acetyl donor, and of ornithine by transacetylation between N(2)-acetylornithine and glutamate. The polypeptide is Arginine biosynthesis bifunctional protein ArgJ (Lactiplantibacillus plantarum (strain ATCC BAA-793 / NCIMB 8826 / WCFS1) (Lactobacillus plantarum)).